We begin with the raw amino-acid sequence, 198 residues long: tRNA (pseudouridine(54)-N(1))-methyltransferase (198 aa).

Leucine 128 is an S-adenosyl-L-methionine binding site.

Belongs to the methyltransferase superfamily. TrmY family. In terms of assembly, homodimer.

The protein resides in the cytoplasm. It catalyses the reaction pseudouridine(54) in tRNA + S-adenosyl-L-methionine = N(1)-methylpseudouridine(54) in tRNA + S-adenosyl-L-homocysteine + H(+). In terms of biological role, specifically catalyzes the N1-methylation of pseudouridine at position 54 (Psi54) in tRNAs. The sequence is that of tRNA (pseudouridine(54)-N(1))-methyltransferase from Haloarcula marismortui (strain ATCC 43049 / DSM 3752 / JCM 8966 / VKM B-1809) (Halobacterium marismortui).